Consider the following 130-residue polypeptide: Probable 4-amino-4-deoxy-L-arabinose-phosphoundecaprenol flippase subunit ArnF (130 aa).

The Cytoplasmic segment spans residues 1–4 (MRGY). The helical transmembrane segment at 5 to 25 (AWGAASVLLVTLAQLLMKWGM) threads the bilayer. The Periplasmic segment spans residues 26–47 (AQIPLMSFADVTLNLFMQYWLP). Residues 48 to 68 (LVVVSGGIFGYALSMLCWFFA) form a helical membrane-spanning segment. Topologically, residues 69 to 77 (LHHLPLNRA) are cytoplasmic. The helical transmembrane segment at 78 to 98 (YPLLSVSYALVYLAAVILPWF) threads the bilayer. Residue N99 is a topological domain, periplasmic. Residues 100-120 (ESATLLKTLGTLFILFGVWLI) form a helical membrane-spanning segment. The Cytoplasmic segment spans residues 121-130 (NSQAKVKTPQ).

The protein belongs to the ArnF family. Heterodimer of ArnE and ArnF.

The protein resides in the cell inner membrane. Its pathway is bacterial outer membrane biogenesis; lipopolysaccharide biosynthesis. Translocates 4-amino-4-deoxy-L-arabinose-phosphoundecaprenol (alpha-L-Ara4N-phosphoundecaprenol) from the cytoplasmic to the periplasmic side of the inner membrane. This is Probable 4-amino-4-deoxy-L-arabinose-phosphoundecaprenol flippase subunit ArnF from Serratia proteamaculans (strain 568).